The following is a 647-amino-acid chain: Calmodulin-binding protein 60 B (647 aa).

Polar residues predominate over residues 1–10 (MMDSGNNNMN). Residues 1-26 (MMDSGNNNMNRAKRNLDGNDDDQPER) form a disordered region. A calmodulin-binding region spans residues 8 to 85 (NMNRAKRNLD…TGSSGSSPKR (78 aa)). The Nuclear localization signal motif lies at 12–19 (AKRNLDGN). The interval 155-278 (EDDEDWTQEE…AFHKKLTAEG (124 aa)) is DNA-binding.

This sequence belongs to the plant ACBP60 protein family. Interacts with calmodulin (CaM). As to expression, expressed in leaves, stems, flowers, developing seeds and root.

The protein localises to the nucleus. Transcription activator that binds DNA in a sequence-specific manner, likely 5'-GAAATTTTGG-3', to promote the expression of target genes. This is Calmodulin-binding protein 60 B from Arabidopsis thaliana (Mouse-ear cress).